The chain runs to 1040 residues: MINPISFRPGPVTFWTTLIYLALLIPIVIINEEPPAAPKTAEPFKGVNLTEAWLDLTTITRAYHPYNSKFNEEVRRYLLEKVESILEENGATWVFDDQMAAAAKDGKSAAVTVFDDNVSNSTFVMGKSNGTTFTRTESINNAAYFEGTNILVYIRGKEDDDGDWWEADYVHGMRRNAKGLTLVNAHYDSVSTGFGATDDGMGVVTCLQVLKYFTTPGNQPQRGIVVMLNNGEEDWLYGARALGQHKLNPFIHTFLNVEGAGAGGRAIVFRATDREVMAAYARTSHPFGTVIASDAFGMGFISSGTDYSVLVDAYGQRGIDLAFFKPRARYHTNQDDTRHASKESLWHILSASIHTTKQLSGDTGNTFIGQRPDKAHGKVANGRPSNGVWFDLFGKSFVLFGLRGMFAWSLTLLIATPLILVGITWLLRNLDKDYFFTSTVKTKEHPEYEAVPIGGWKGFFRWAMMVSIFYFSFWMIMRGANFVRPSALHRGYANLWLFVFGWIVLVAVTALEDRRRIAAGYIFVFLESAIFLSCLISFVELLALPRKSAYALQVQEDYDGHDHSGYQGYRDSTDGLSSGARAESSASAGSPSSPTVAQEPSKPTAPAGTTNGLSTAPSVAAHSSQPQPAPATPTPGRSTSAPIPSTTPRDEDESEDDDDEATERTPLVGGNGTNDRGRTTFATTYRRSITALVHGARKMEEDGEPYEHEQDWSGHLPSWAWFFQFLLLGPFMIILAAQTGLMLTDAVYQTGSDGSKLFTPYLMIFFFTLLLILPLTPFIHRVTHHIPVFLLVVFIVTLTYNLIAFPFSANNRYKAFFGQYIDVATGENKVCYTGIEEYVRPIIAELPSASGRDVTCGKSLRRGSTIATCCFDGSAVPPKLGSEDLDGLPQDNYADIITVNATRSHKKGDSSRTTARIEITADNTKSCFLQFKKPVSALTIESGSGWDDRFGQYPEDGVGLVRLWHREFDKTWVVNAEWKGSETRKGDDENDGTVICMWSDANTPGTIPALDEALQFVPSWAAVTKFSEGLVEGRKAFKIV.

The Cytoplasmic portion of the chain corresponds to 1–9 (MINPISFRP). The chain crosses the membrane as a helical span at residues 10–30 (GPVTFWTTLIYLALLIPIVII). At 31-405 (NEEPPAAPKT…SFVLFGLRGM (375 aa)) the chain is on the vacuolar side. N-linked (GlcNAc...) asparagine glycosylation is found at asparagine 48, asparagine 117, asparagine 120, and asparagine 129. Zn(2+) is bound by residues histidine 186 and aspartate 198. The active-site Proton acceptor is glutamate 232. The Zn(2+) site is built by glutamate 233, glutamate 258, and histidine 331. Residues 406-426 (FAWSLTLLIATPLILVGITWL) form a helical membrane-spanning segment. Residues 427–436 (LRNLDKDYFF) are Cytoplasmic-facing. A helical transmembrane segment spans residues 437–456 (TSTVKTKEHPEYEAVPIGGW). The Vacuolar segment spans residues 457 to 462 (KGFFRW). The helical transmembrane segment at 463–483 (AMMVSIFYFSFWMIMRGANFV) threads the bilayer. Residues 484-490 (RPSALHR) lie on the Cytoplasmic side of the membrane. The chain crosses the membrane as a helical span at residues 491–511 (GYANLWLFVFGWIVLVAVTAL). Residues 512–521 (EDRRRIAAGY) are Vacuolar-facing. A helical membrane pass occupies residues 522 to 542 (IFVFLESAIFLSCLISFVELL). Residues 543 to 715 (ALPRKSAYAL…YEHEQDWSGH (173 aa)) lie on the Cytoplasmic side of the membrane. Positions 563–680 (HSGYQGYRDS…NGTNDRGRTT (118 aa)) are disordered. Low complexity-rich tracts occupy residues 577–594 (SSGA…PSSP) and 616–626 (APSVAAHSSQP). The segment covering 636-647 (GRSTSAPIPSTT) has biased composition (polar residues). Acidic residues predominate over residues 650–661 (DEDESEDDDDEA). A helical membrane pass occupies residues 716–736 (LPSWAWFFQFLLLGPFMIILA). Residues 737–758 (AQTGLMLTDAVYQTGSDGSKLF) are Vacuolar-facing. A helical membrane pass occupies residues 759-779 (TPYLMIFFFTLLLILPLTPFI). Over 780 to 785 (HRVTHH) the chain is Cytoplasmic. A helical transmembrane segment spans residues 786–806 (IPVFLLVVFIVTLTYNLIAFP). Residues 807–1040 (FSANNRYKAF…VEGRKAFKIV (234 aa)) lie on the Vacuolar side of the membrane. N-linked (GlcNAc...) asparagine glycosylation occurs at asparagine 900.

Belongs to the peptidase M28 family. It depends on Zn(2+) as a cofactor.

It localises to the vacuole membrane. Functionally, may be involved in vacuolar sorting and osmoregulation. This Sordaria macrospora (strain ATCC MYA-333 / DSM 997 / K(L3346) / K-hell) protein is Vacuolar membrane protease.